The following is a 169-amino-acid chain: Centrosomal protein 20 (169 aa).

The interval 1-104 (MATVGDLKAV…VVEDLNSQSV (104 aa)) is necessary and sufficient for homooligomerization and localization to centrosomes and pericentriolar satellites. The 33-residue stretch at 49 to 81 (ENLLINELIREYLAFNKYSYTSSVLTAETGLSE) folds into the LisH domain. The tract at residues 135–169 (TFRNIPRGRNTKDTHSGPVQLTQTSTEDWHQRRHR) is disordered. The span at 151 to 160 (GPVQLTQTST) shows a compositional bias: polar residues.

Belongs to the CEP43 family. In terms of assembly, homooligomer; probably required for localization to centrosomes.

It localises to the cell projection. It is found in the cilium. The protein localises to the cytoplasm. Its subcellular location is the cytoskeleton. The protein resides in the cilium basal body. It localises to the microtubule organizing center. It is found in the centrosome. The protein localises to the cytoplasmic granule. Its subcellular location is the centriolar satellite. Involved in the biogenesis of cilia. Required for the recruitment of PLK1 to centrosomes and S phase progression. In Xenopus laevis (African clawed frog), this protein is Centrosomal protein 20 (Cep20).